We begin with the raw amino-acid sequence, 227 residues long: Cytochrome c oxidase subunit 2 (227 aa).

At M1–S14 the chain is on the mitochondrial intermembrane side. The helical transmembrane segment at P15–M45 threads the bilayer. Residues L46 to Q59 lie on the Mitochondrial matrix side of the membrane. A helical membrane pass occupies residues E60 to M87. The Mitochondrial intermembrane portion of the chain corresponds to D88–L227. Cu cation-binding residues include H161, C196, E198, C200, H204, and M207. A Mg(2+)-binding site is contributed by E198.

This sequence belongs to the cytochrome c oxidase subunit 2 family. As to quaternary structure, component of the cytochrome c oxidase (complex IV, CIV), a multisubunit enzyme composed of 14 subunits. The complex is composed of a catalytic core of 3 subunits MT-CO1, MT-CO2 and MT-CO3, encoded in the mitochondrial DNA, and 11 supernumerary subunits COX4I, COX5A, COX5B, COX6A, COX6B, COX6C, COX7A, COX7B, COX7C, COX8 and NDUFA4, which are encoded in the nuclear genome. The complex exists as a monomer or a dimer and forms supercomplexes (SCs) in the inner mitochondrial membrane with NADH-ubiquinone oxidoreductase (complex I, CI) and ubiquinol-cytochrome c oxidoreductase (cytochrome b-c1 complex, complex III, CIII), resulting in different assemblies (supercomplex SCI(1)III(2)IV(1) and megacomplex MCI(2)III(2)IV(2)). Found in a complex with TMEM177, COA6, COX18, COX20, SCO1 and SCO2. Interacts with TMEM177 in a COX20-dependent manner. Interacts with COX20. Interacts with COX16. Requires Cu cation as cofactor.

The protein resides in the mitochondrion inner membrane. The catalysed reaction is 4 Fe(II)-[cytochrome c] + O2 + 8 H(+)(in) = 4 Fe(III)-[cytochrome c] + 2 H2O + 4 H(+)(out). In terms of biological role, component of the cytochrome c oxidase, the last enzyme in the mitochondrial electron transport chain which drives oxidative phosphorylation. The respiratory chain contains 3 multisubunit complexes succinate dehydrogenase (complex II, CII), ubiquinol-cytochrome c oxidoreductase (cytochrome b-c1 complex, complex III, CIII) and cytochrome c oxidase (complex IV, CIV), that cooperate to transfer electrons derived from NADH and succinate to molecular oxygen, creating an electrochemical gradient over the inner membrane that drives transmembrane transport and the ATP synthase. Cytochrome c oxidase is the component of the respiratory chain that catalyzes the reduction of oxygen to water. Electrons originating from reduced cytochrome c in the intermembrane space (IMS) are transferred via the dinuclear copper A center (CU(A)) of subunit 2 and heme A of subunit 1 to the active site in subunit 1, a binuclear center (BNC) formed by heme A3 and copper B (CU(B)). The BNC reduces molecular oxygen to 2 water molecules using 4 electrons from cytochrome c in the IMS and 4 protons from the mitochondrial matrix. In Tragelaphus imberbis (Lesser kudu), this protein is Cytochrome c oxidase subunit 2 (MT-CO2).